The sequence spans 55 residues: Methylmalonyl-CoA decarboxylase subunit epsilon (55 aa).

In terms of assembly, the methylmalonyl-CoA decarboxylase is composed of five subunits: the carboxyltransferase alpha subunit (MmdA), the tunnel beta subunit (MmdB), the biotin-containing gamma subunit (MmdC), and the delta (MmdD) and epsilon (MmdE) subunits.

The protein resides in the cell membrane. It catalyses the reaction (S)-methylmalonyl-CoA + Na(+)(in) + H(+)(out) = propanoyl-CoA + Na(+)(out) + CO2. Completely inhibited by avidin. Functionally, subunit of the sodium ion pump methylmalonyl-CoA decarboxylase, which converts the chemical energy of a decarboxylation reaction into an electrochemical gradient of Na(+) ions across the cytoplasmic membrane, thereby creating a sodium ion motive force that is used for ATP synthesis. The epsilon subunit seems not important for the catalysis of either decarboxylation or Na(+) transport, but it improves binding of the alpha subunit and plays an important role in stabilizing the methylmalonyl-CoA-decarboxylase enzyme complex. Can also convert malonyl-CoA into acetyl-CoA. This is Methylmalonyl-CoA decarboxylase subunit epsilon from Veillonella parvula (Staphylococcus parvulus).